The primary structure comprises 2057 residues: Fer-1-like protein 5 (2057 aa).

7 C2 domains span residues 1–99 (MLRL…VLFV), 152–265 (PGST…TLLR), 308–425 (DDTD…EGVY), 1057–1188 (DTRP…MRWH), 1213–1346 (KLGE…AQDY), 1467–1587 (PKPP…AHCG), and 1705–1853 (GPPG…KQCS). Ca(2+) contacts are provided by D1502, D1508, D1557, F1558, D1559, S1562, D1565, D1824, S1827, and D1830. The helical transmembrane segment at 1962-1982 (LIAFMVISIIALMLFNFIYSA) threads the bilayer.

Belongs to the ferlin family. As to quaternary structure, interacts (via second C2 domain) with EHD1 and EHD2. Ca(2+) is required as a cofactor.

The protein localises to the cell membrane. It localises to the membrane. Its function is as follows. Plays a role in myoblast fusion; probable mediator of endocytic recycling for membrane trafficking events during myotube formation. This is Fer-1-like protein 5 (FER1L5) from Homo sapiens (Human).